The following is a 675-amino-acid chain: Methionine--tRNA ligase (675 aa).

A 'HIGH' region motif is present at residues 15-25 (PYANGSIHLGH). Zn(2+) contacts are provided by Cys146, Cys149, Cys159, and Cys162. A 'KMSKS' region motif is present at residues 332–336 (KMSKS). Lys335 serves as a coordination point for ATP. The 103-residue stretch at 573 to 675 (DFAKIDMRIA…SGAKPGHQVK (103 aa)) folds into the tRNA-binding domain.

This sequence belongs to the class-I aminoacyl-tRNA synthetase family. MetG type 1 subfamily. Homodimer. The cofactor is Zn(2+).

The protein localises to the cytoplasm. The enzyme catalyses tRNA(Met) + L-methionine + ATP = L-methionyl-tRNA(Met) + AMP + diphosphate. In terms of biological role, is required not only for elongation of protein synthesis but also for the initiation of all mRNA translation through initiator tRNA(fMet) aminoacylation. The polypeptide is Methionine--tRNA ligase (Proteus mirabilis (strain HI4320)).